We begin with the raw amino-acid sequence, 122 residues long: Early nodulin-10 (122 aa).

A signal peptide spans 1–36; the sequence is MTCTLKSPPKMASFFLSSLVLMFIAALILLPQGLAA. 10 consecutive repeat copies span residues 45-49, 51-55, 58-62, 68-72, 77-81, 82-86, 88-92, 99-103, 106-110, and 113-117. Residues 45 to 117 are 10 X 5 AA approximate repeats of P-P-X-X-X; it reads PPDSELPPYR…FYKQAPPSQK (73 aa). The interval 90 to 122 is disordered; the sequence is TYKPSKKRLPPPFQKLPPFYKQAPPSQKLPRVN.

As to expression, root nodules. In early nodules, expressed only in the interior of the developing nodule with no expression in other nodule tissues, including meristem. In slightly older nodules, expressed in almost all cells of the central zone. In more mature nodules, expression is restricted to the invasion zone.

This Medicago sativa (Alfalfa) protein is Early nodulin-10 (ENOD10).